A 126-amino-acid chain; its full sequence is Large ribosomal subunit protein uL24 (126 aa).

The interval 1 to 23 is disordered; sequence MKFSRDVTSSRRKQRKAHFGAPS.

The protein belongs to the universal ribosomal protein uL24 family. In terms of assembly, component of the large ribosomal subunit (LSU). Mature yeast ribosomes consist of a small (40S) and a large (60S) subunit. The 40S small subunit contains 1 molecule of ribosomal RNA (18S rRNA) and at least 33 different proteins. The large 60S subunit contains 3 rRNA molecules (25S, 5.8S and 5S rRNA) and at least 46 different proteins.

The protein localises to the cytoplasm. Its subcellular location is the nucleus. It localises to the nucleolus. Its function is as follows. Component of the ribosome, a large ribonucleoprotein complex responsible for the synthesis of proteins in the cell. The small ribosomal subunit (SSU) binds messenger RNAs (mRNAs) and translates the encoded message by selecting cognate aminoacyl-transfer RNA (tRNA) molecules. The large subunit (LSU) contains the ribosomal catalytic site termed the peptidyl transferase center (PTC), which catalyzes the formation of peptide bonds, thereby polymerizing the amino acids delivered by tRNAs into a polypeptide chain. The nascent polypeptides leave the ribosome through a tunnel in the LSU and interact with protein factors that function in enzymatic processing, targeting, and the membrane insertion of nascent chains at the exit of the ribosomal tunnel. In Schizosaccharomyces pombe (strain 972 / ATCC 24843) (Fission yeast), this protein is Large ribosomal subunit protein uL24 (rpl26).